Here is a 333-residue protein sequence, read N- to C-terminus: MQHNQLLEQLYSGHSLSTSESTALFNAVIQGELSNEQIAAMLIALKVRGANTEEITGAVAASLQNAKVFPRPDYPFADIVGTGGDGQNTINISTASAIVAASMGAKVAKHGNRSVSSKSGASDVLTALGVNVNVTLEQARQALDEIGVCFLFAQQYHSGFRHVAPVRAALKTHTIFNILGPLINPARPTYHLLGVYAPELVKTYAETAVALEHQHSFVVHGSGLDEVALHGETQVAEIKNGKIEYFTLTPEDFGLKTQSLESLRGGEPQENTQYLTALLQGKGKAEHANAVAANTALLLKLFGYDDLKQNVQNVLAHLVSGKAFETLQKLTTY.

Residues Gly81, 84-85, Thr89, 91-94, 109-117, and Ala121 each bind 5-phospho-alpha-D-ribose 1-diphosphate; these read GD, NIST, and KHGNRSVSS. An anthranilate-binding site is contributed by Gly81. Ser93 contributes to the Mg(2+) binding site. Asn112 serves as a coordination point for anthranilate. Position 167 (Arg167) interacts with anthranilate. Positions 225 and 226 each coordinate Mg(2+).

The protein belongs to the anthranilate phosphoribosyltransferase family. Homodimer. The cofactor is Mg(2+).

The enzyme catalyses N-(5-phospho-beta-D-ribosyl)anthranilate + diphosphate = 5-phospho-alpha-D-ribose 1-diphosphate + anthranilate. It functions in the pathway amino-acid biosynthesis; L-tryptophan biosynthesis; L-tryptophan from chorismate: step 2/5. In terms of biological role, catalyzes the transfer of the phosphoribosyl group of 5-phosphorylribose-1-pyrophosphate (PRPP) to anthranilate to yield N-(5'-phosphoribosyl)-anthranilate (PRA). In Haemophilus influenzae (strain PittEE), this protein is Anthranilate phosphoribosyltransferase.